Here is a 299-residue protein sequence, read N- to C-terminus: tRNA dimethylallyltransferase (299 aa).

An ATP-binding site is contributed by 13–20; sequence GPTASGKT. A substrate-binding site is contributed by 15 to 20; sequence TASGKT. The tract at residues 38 to 41 is interaction with substrate tRNA; the sequence is DSRQ.

Belongs to the IPP transferase family. As to quaternary structure, monomer. Mg(2+) is required as a cofactor.

The enzyme catalyses adenosine(37) in tRNA + dimethylallyl diphosphate = N(6)-dimethylallyladenosine(37) in tRNA + diphosphate. In terms of biological role, catalyzes the transfer of a dimethylallyl group onto the adenine at position 37 in tRNAs that read codons beginning with uridine, leading to the formation of N6-(dimethylallyl)adenosine (i(6)A). This chain is tRNA dimethylallyltransferase, found in Prochlorococcus marinus (strain MIT 9313).